The primary structure comprises 334 residues: D-alanine--D-alanine ligase (334 aa).

In terms of domain architecture, ATP-grasp spans Lys110–Gln306. Leu138–Gln190 is an ATP binding site. Mg(2+)-binding residues include Asp258, Glu272, and Asn274.

It belongs to the D-alanine--D-alanine ligase family. Mg(2+) serves as cofactor. Mn(2+) is required as a cofactor.

The protein localises to the cytoplasm. The enzyme catalyses 2 D-alanine + ATP = D-alanyl-D-alanine + ADP + phosphate + H(+). It functions in the pathway cell wall biogenesis; peptidoglycan biosynthesis. In terms of biological role, cell wall formation. The polypeptide is D-alanine--D-alanine ligase (Anaplasma marginale (strain Florida)).